A 197-amino-acid chain; its full sequence is Class A basic helix-loop-helix protein 15 (197 aa).

Residues 1–12 (MKTKNRPPRRRT) show a composition bias toward basic residues. Disordered regions lie at residues 1–82 (MKTK…ERER) and 178–197 (QPQG…REGS). Residues T12 and T25 each carry the phosphothreonine modification. A compositionally biased stretch (basic and acidic residues) spans 65 to 82 (GRRENSVQRRLESNERER). One can recognise a bHLH domain in the interval 72–124 (QRRLESNERERQRMHKLNNAFQALREVIPHVRADKKLSKIETLTLAKNYIKSL).

In terms of assembly, forms homodimers or heterodimers with TCF3 gene products E12 and E47. These dimers bind to the E-box site, however, heterodimer with MYOD1 does not bind target DNA. In terms of tissue distribution, expressed in pancreatic tissue only in acinar cells. There is a complete absence of expression in intra- or interlobular pancreatic ducts and in all islet cells.

It is found in the nucleus. Plays a role in controlling the transcriptional activity of MyoD, ensuring that expanding myoblast populations remain undifferentiated. Repression may occur through muscle-specific E-box occupancy by homodimers. May also negatively regulate bHLH-mediated transcription through an N-terminal repressor domain. Serves as a key regulator of acinar cell function, stability, and identity. Also required for normal organelle localization in exocrine cells and for mitochondrial calcium ion transport. May function as a unique regulator of gene expression in several different embryonic and postnatal cell lineages. Binds to the E-box consensus sequence 5'-CANNTG-3'. The polypeptide is Class A basic helix-loop-helix protein 15 (Bhlha15) (Mus musculus (Mouse)).